Consider the following 1435-residue polypeptide: Gag-Pol polyprotein (1435 aa).

The N-myristoyl glycine; by host moiety is linked to residue glycine 2. Positions 7–31 (VLSGGELDKWEKIRLRPGGKKQYKL) are interaction with Gp41. Residues 8–43 (LSGGELDKWEKIRLRPGGKKQYKLKHIVWASRELER) are interaction with host CALM1. Residues 12–19 (ELDKWEKI) are interaction with host AP3D1. The interval 14-33 (DKWEKIRLRPGGKKQYKLKH) is interaction with membrane phosphatidylinositol 4,5-bisphosphate and RNA. The short motif at 16-22 (WEKIRLR) is the Nuclear export signal element. The short motif at 26–32 (KKQYKLK) is the Nuclear localization signal element. The tract at residues 73 to 77 (EELRS) is interaction with membrane phosphatidylinositol 4,5-bisphosphate. Residues 106-128 (EEQNKSKKKAQQAAADTGNNSQV) are disordered. Tyrosine 132 bears the Phosphotyrosine; by host mark. Serine 148 bears the Phosphoserine; by host MAPK1 mark. Positions 189–227 (NTVGGHQAAMQMLKETINEEAAEWDRLHPVHAGPIAPGQ) are interaction with human PPIA/CYPA and NUP153. The segment at 277–363 (YSPTSILDIR…GGPGHKARVL (87 aa)) is dimerization/Multimerization of capsid protein p24. 2 CCHC-type zinc fingers span residues 390-407 (VKCFNCGKEGHIAKNCRA) and 411-428 (KGCWKCGKEGHQMKDCTE). The segment at 444–464 (KAREFSSEQTRANSPTRRELQ) is disordered. Residues 489-493 (PQITL) are dimerization of protease. Positions 508-577 (KEALLDTGAD…TPVNIIGRNL (70 aa)) constitute a Peptidase A2 domain. The For protease activity; shared with dimeric partner role is filled by aspartate 513. 2 dimerization of protease regions span residues 537 to 543 (GIGGFIK) and 576 to 588 (NLLTQIGCTLNFP). The Reverse transcriptase domain maps to 631–821 (EGKISKIGPE…PPFLWMGYEL (191 aa)). Aspartate 697, aspartate 772, and aspartate 773 together coordinate Mg(2+). Positions 814–822 (FLWMGYELH) are RT 'primer grip'. Positions 985–1001 (WEAWWTEYWQATWIPEW) match the Tryptophan repeat motif motif. The 124-residue stretch at 1021-1144 (IIGAETFYVD…VDGLVSAGIR (124 aa)) folds into the RNase H type-1 domain. Positions 1030, 1065, 1085, and 1136 each coordinate Mg(2+). The Integrase-type zinc finger occupies 1150 to 1191 (DGIDKAQEEHEKYHSNWRAMASDFNLPPVVAKEIVASCDKCQ). The Zn(2+) site is built by histidine 1159, histidine 1163, cysteine 1187, and cysteine 1190. The 151-residue stretch at 1201–1351 (VDCSPGIWQL…SAGERIVDII (151 aa)) folds into the Integrase catalytic domain. The Mg(2+) site is built by aspartate 1211, aspartate 1263, and glutamate 1299. The segment at residues 1370-1417 (FRVYYRDSRDPVWKGPAKLLWKGEGAVVIQDNSDIKVVPRRKAKIIRD) is a DNA-binding region (integrase-type).

Homotrimer; further assembles as hexamers of trimers. Matrix protein p17: Interacts with gp41 (via C-terminus). Interacts with host CALM1; this interaction induces a conformational change in the Matrix protein, triggering exposure of the myristate group. Interacts with host AP3D1; this interaction allows the polyprotein trafficking to multivesicular bodies during virus assembly. Part of the pre-integration complex (PIC) which is composed of viral genome, matrix protein, Vpr and integrase. In terms of assembly, homodimer; the homodimer further multimerizes as homohexamers or homopentamers. Interacts with human PPIA/CYPA; This interaction stabilizes the capsid. Interacts with human NUP153. Interacts with host PDZD8; this interaction stabilizes the capsid. Interacts with monkey TRIM5; this interaction destabilizes the capsid. As to quaternary structure, homodimer, whose active site consists of two apposed aspartic acid residues. Heterodimer of p66 RT and p51 RT (RT p66/p51). Heterodimerization of RT is essential for DNA polymerase activity. The overall folding of the subdomains is similar in p66 RT and p51 RT but the spatial arrangements of the subdomains are dramatically different. In terms of assembly, homotetramer; may further associate as a homohexadecamer. Part of the pre-integration complex (PIC) which is composed of viral genome, matrix protein, Vpr and integrase. Interacts with human SMARCB1/INI1 and human PSIP1/LEDGF isoform 1. Interacts with human KPNA3; this interaction might play a role in nuclear import of the pre-integration complex. Interacts with human NUP153; this interaction might play a role in nuclear import of the pre-integration complex. It depends on Mg(2+) as a cofactor. In terms of processing, specific enzymatic cleavages by the viral protease yield mature proteins. The protease is released by autocatalytic cleavage. The polyprotein is cleaved during and after budding, this process is termed maturation. Proteolytic cleavage of p66 RT removes the RNase H domain to yield the p51 RT subunit. Nucleocapsid protein p7 might be further cleaved after virus entry. Tyrosine phosphorylated presumably in the virion by a host kinase. Phosphorylation is apparently not a major regulator of membrane association. Post-translationally, phosphorylated possibly by host MAPK1; this phosphorylation is necessary for Pin1-mediated virion uncoating. In terms of processing, methylated by host PRMT6, impairing its function by reducing RNA annealing and the initiation of reverse transcription.

It localises to the host cell membrane. Its subcellular location is the host endosome. It is found in the host multivesicular body. The protein localises to the virion membrane. The protein resides in the host nucleus. It localises to the host cytoplasm. Its subcellular location is the virion. It catalyses the reaction Specific for a P1 residue that is hydrophobic, and P1' variable, but often Pro.. It carries out the reaction Endohydrolysis of RNA in RNA/DNA hybrids. Three different cleavage modes: 1. sequence-specific internal cleavage of RNA. Human immunodeficiency virus type 1 and Moloney murine leukemia virus enzymes prefer to cleave the RNA strand one nucleotide away from the RNA-DNA junction. 2. RNA 5'-end directed cleavage 13-19 nucleotides from the RNA end. 3. DNA 3'-end directed cleavage 15-20 nucleotides away from the primer terminus.. The catalysed reaction is 3'-end directed exonucleolytic cleavage of viral RNA-DNA hybrid.. The enzyme catalyses DNA(n) + a 2'-deoxyribonucleoside 5'-triphosphate = DNA(n+1) + diphosphate. Its activity is regulated as follows. Protease: The viral protease is inhibited by many synthetic protease inhibitors (PIs), such as amprenavir, atazanavir, indinavir, loprinavir, nelfinavir, ritonavir and saquinavir. Use of protease inhibitors in tritherapy regimens permit more ambitious therapeutic strategies. Reverse transcriptase/ribonuclease H: RT can be inhibited either by nucleoside RT inhibitors (NRTIs) or by non nucleoside RT inhibitors (NNRTIs). NRTIs act as chain terminators, whereas NNRTIs inhibit DNA polymerization by binding a small hydrophobic pocket near the RT active site and inducing an allosteric change in this region. Classical NRTIs are abacavir, adefovir (PMEA), didanosine (ddI), lamivudine (3TC), stavudine (d4T), tenofovir (PMPA), zalcitabine (ddC), and zidovudine (AZT). Classical NNRTIs are atevirdine (BHAP U-87201E), delavirdine, efavirenz (DMP-266), emivirine (I-EBU), and nevirapine (BI-RG-587). The tritherapies used as a basic effective treatment of AIDS associate two NRTIs and one NNRTI. Mediates, with Gag polyprotein, the essential events in virion assembly, including binding the plasma membrane, making the protein-protein interactions necessary to create spherical particles, recruiting the viral Env proteins, and packaging the genomic RNA via direct interactions with the RNA packaging sequence (Psi). Gag-Pol polyprotein may regulate its own translation, by the binding genomic RNA in the 5'-UTR. At low concentration, the polyprotein would promote translation, whereas at high concentration, the polyprotein would encapsidate genomic RNA and then shut off translation. Its function is as follows. Targets the polyprotein to the plasma membrane via a multipartite membrane-binding signal, that includes its myristoylated N-terminus. Matrix protein is part of the pre-integration complex. Implicated in the release from host cell mediated by Vpu. Binds to RNA. In terms of biological role, forms the conical core that encapsulates the genomic RNA-nucleocapsid complex in the virion. Most core are conical, with only 7% tubular. The core is constituted by capsid protein hexamer subunits. The core is disassembled soon after virion entry. Host restriction factors such as TRIM5-alpha or TRIMCyp bind retroviral capsids and cause premature capsid disassembly, leading to blocks in reverse transcription. Capsid restriction by TRIM5 is one of the factors which restricts HIV-1 to the human species. Host PIN1 apparently facilitates the virion uncoating. On the other hand, interactions with PDZD8 or CYPA stabilize the capsid. Functionally, encapsulates and protects viral dimeric unspliced genomic RNA (gRNA). Binds these RNAs through its zinc fingers. Acts as a nucleic acid chaperone which is involved in rearangement of nucleic acid secondary structure during gRNA retrotranscription. Also facilitates template switch leading to recombination. As part of the polyprotein, participates in gRNA dimerization, packaging, tRNA incorporation and virion assembly. Aspartyl protease that mediates proteolytic cleavages of Gag and Gag-Pol polyproteins during or shortly after the release of the virion from the plasma membrane. Cleavages take place as an ordered, step-wise cascade to yield mature proteins. This process is called maturation. Displays maximal activity during the budding process just prior to particle release from the cell. Also cleaves Nef and Vif, probably concomitantly with viral structural proteins on maturation of virus particles. Hydrolyzes host EIF4GI and PABP1 in order to shut off the capped cellular mRNA translation. The resulting inhibition of cellular protein synthesis serves to ensure maximal viral gene expression and to evade host immune response. Also mediates cleavage of host YTHDF3. Mediates cleavage of host CARD8, thereby activating the CARD8 inflammasome, leading to the clearance of latent HIV-1 in patient CD4(+) T-cells after viral reactivation; in contrast, HIV-1 can evade CARD8-sensing when its protease remains inactive in infected cells prior to viral budding. Its function is as follows. Multifunctional enzyme that converts the viral RNA genome into dsDNA in the cytoplasm, shortly after virus entry into the cell. This enzyme displays a DNA polymerase activity that can copy either DNA or RNA templates, and a ribonuclease H (RNase H) activity that cleaves the RNA strand of RNA-DNA heteroduplexes in a partially processive 3' to 5' endonucleasic mode. Conversion of viral genomic RNA into dsDNA requires many steps. A tRNA(3)-Lys binds to the primer-binding site (PBS) situated at the 5'-end of the viral RNA. RT uses the 3' end of the tRNA primer to perform a short round of RNA-dependent minus-strand DNA synthesis. The reading proceeds through the U5 region and ends after the repeated (R) region which is present at both ends of viral RNA. The portion of the RNA-DNA heteroduplex is digested by the RNase H, resulting in a ssDNA product attached to the tRNA primer. This ssDNA/tRNA hybridizes with the identical R region situated at the 3' end of viral RNA. This template exchange, known as minus-strand DNA strong stop transfer, can be either intra- or intermolecular. RT uses the 3' end of this newly synthesized short ssDNA to perform the RNA-dependent minus-strand DNA synthesis of the whole template. RNase H digests the RNA template except for two polypurine tracts (PPTs) situated at the 5'-end and near the center of the genome. It is not clear if both polymerase and RNase H activities are simultaneous. RNase H probably can proceed both in a polymerase-dependent (RNA cut into small fragments by the same RT performing DNA synthesis) and a polymerase-independent mode (cleavage of remaining RNA fragments by free RTs). Secondly, RT performs DNA-directed plus-strand DNA synthesis using the PPTs that have not been removed by RNase H as primers. PPTs and tRNA primers are then removed by RNase H. The 3' and 5' ssDNA PBS regions hybridize to form a circular dsDNA intermediate. Strand displacement synthesis by RT to the PBS and PPT ends produces a blunt ended, linear dsDNA copy of the viral genome that includes long terminal repeats (LTRs) at both ends. In terms of biological role, catalyzes viral DNA integration into the host chromosome, by performing a series of DNA cutting and joining reactions. This enzyme activity takes place after virion entry into a cell and reverse transcription of the RNA genome in dsDNA. The first step in the integration process is 3' processing. This step requires a complex comprising the viral genome, matrix protein, Vpr and integrase. This complex is called the pre-integration complex (PIC). The integrase protein removes 2 nucleotides from each 3' end of the viral DNA, leaving recessed CA OH's at the 3' ends. In the second step, the PIC enters cell nucleus. This process is mediated through integrase and Vpr proteins, and allows the virus to infect a non dividing cell. This ability to enter the nucleus is specific of lentiviruses, other retroviruses cannot and rely on cell division to access cell chromosomes. In the third step, termed strand transfer, the integrase protein joins the previously processed 3' ends to the 5' ends of strands of target cellular DNA at the site of integration. The 5'-ends are produced by integrase-catalyzed staggered cuts, 5 bp apart. A Y-shaped, gapped, recombination intermediate results, with the 5'-ends of the viral DNA strands and the 3' ends of target DNA strands remaining unjoined, flanking a gap of 5 bp. The last step is viral DNA integration into host chromosome. This involves host DNA repair synthesis in which the 5 bp gaps between the unjoined strands are filled in and then ligated. Since this process occurs at both cuts flanking the HIV genome, a 5 bp duplication of host DNA is produced at the ends of HIV-1 integration. Alternatively, Integrase may catalyze the excision of viral DNA just after strand transfer, this is termed disintegration. The sequence is that of Gag-Pol polyprotein (gag-pol) from Human immunodeficiency virus type 1 group M subtype B (isolate NY5) (HIV-1).